The primary structure comprises 463 residues: tRNA modification GTPase MnmE (463 aa).

(6S)-5-formyl-5,6,7,8-tetrahydrofolate-binding residues include R27, E92, and K131. The region spanning 234–386 (GIKLAIVGKP…LEDHLLKIYS (153 aa)) is the TrmE-type G domain. N244 provides a ligand contact to K(+). GTP contacts are provided by residues 244–249 (NVGKSS), 263–269 (TNVAGTT), and 288–291 (DTAG). S248 contributes to the Mg(2+) binding site. K(+) contacts are provided by T263, V265, and T268. T269 is a binding site for Mg(2+). K463 serves as a coordination point for (6S)-5-formyl-5,6,7,8-tetrahydrofolate.

This sequence belongs to the TRAFAC class TrmE-Era-EngA-EngB-Septin-like GTPase superfamily. TrmE GTPase family. Homodimer. Heterotetramer of two MnmE and two MnmG subunits. It depends on K(+) as a cofactor.

It localises to the cytoplasm. Exhibits a very high intrinsic GTPase hydrolysis rate. Involved in the addition of a carboxymethylaminomethyl (cmnm) group at the wobble position (U34) of certain tRNAs, forming tRNA-cmnm(5)s(2)U34. This Mycoplasmopsis synoviae (strain 53) (Mycoplasma synoviae) protein is tRNA modification GTPase MnmE.